The primary structure comprises 258 residues: MNKLALQGPLWLASDLHLGPATPATAEAFLGLLQAAADEASALLLPGDIFDAWIGDDVIRAAPPWLAAVLHGIRAAAGRIPVYLGRGNRDFLIGQELADALGAHLLPEPVLLETDYGRILLTHGDEYCTDDSAYQQFRAMVRNPQWQAQFLAKSIPERLAMAEQARGESQAANQAKSMEIMDVNPAAVEAALREADVDVLVHGHTHRPARHVLSVDGRKRERWVLPDWDCDHADPPRGGWLVIDRDGLQCFDLVEDED.

Residues aspartate 15, histidine 17, aspartate 48, asparagine 88, and histidine 123 each coordinate Mn(2+). 88-89 (NR) contributes to the substrate binding site. Positions 131, 169, 173, 176, and 204 each coordinate substrate. Residues histidine 204 and histidine 206 each contribute to the Mn(2+) site.

Belongs to the LpxH family. Mn(2+) is required as a cofactor.

It is found in the cell inner membrane. The catalysed reaction is UDP-2-N,3-O-bis[(3R)-3-hydroxytetradecanoyl]-alpha-D-glucosamine + H2O = 2-N,3-O-bis[(3R)-3-hydroxytetradecanoyl]-alpha-D-glucosaminyl 1-phosphate + UMP + 2 H(+). Its pathway is glycolipid biosynthesis; lipid IV(A) biosynthesis; lipid IV(A) from (3R)-3-hydroxytetradecanoyl-[acyl-carrier-protein] and UDP-N-acetyl-alpha-D-glucosamine: step 4/6. Hydrolyzes the pyrophosphate bond of UDP-2,3-diacylglucosamine to yield 2,3-diacylglucosamine 1-phosphate (lipid X) and UMP by catalyzing the attack of water at the alpha-P atom. Involved in the biosynthesis of lipid A, a phosphorylated glycolipid that anchors the lipopolysaccharide to the outer membrane of the cell. The chain is UDP-2,3-diacylglucosamine hydrolase from Bordetella pertussis (strain Tohama I / ATCC BAA-589 / NCTC 13251).